The primary structure comprises 125 residues: Plastocyanin (125 aa).

The signal sequence occupies residues 1-34 (MKVLASFARRLSLFAVAAVLCVGSFFLSAAPASA). One can recognise a Plastocyanin-like domain in the interval 35–125 (QTVAIKMGAD…AGMVGKIVVQ (91 aa)). Positions 73, 110, 113, and 118 each coordinate Cu cation.

This sequence belongs to the plastocyanin family. Cu(2+) is required as a cofactor.

The protein localises to the cellular thylakoid membrane. Participates in electron transfer between P700 and the cytochrome b6-f complex in photosystem I. This Synechococcus elongatus (strain ATCC 33912 / PCC 7942 / FACHB-805) (Anacystis nidulans R2) protein is Plastocyanin (petE).